Consider the following 293-residue polypeptide: Cep170-like protein (293 aa).

Disordered stretches follow at residues 78-110 (PPLVHSKTPEGNNGRSGDPRPQAAEPPDHLTIT) and 217-270 (FPSA…AESE). Over residues 227–245 (KQKSSPVNNHHSPGQTPTL) the composition is skewed to polar residues.

Belongs to the CEP170 family.

This chain is Cep170-like protein (CEP170P1), found in Homo sapiens (Human).